A 193-amino-acid polypeptide reads, in one-letter code: Deoxycytidylate deaminase (193 aa).

In terms of domain architecture, CMP/dCMP-type deaminase spans 1-171 (MKASTVLQIA…DILRNAGIEV (171 aa)). Zn(2+)-binding residues include Cys-19, Cys-49, His-94, Glu-102, and His-104. Glu-106 (proton donor) is an active-site residue. Cys-132 and Cys-135 together coordinate Zn(2+). Residue Tyr-153 participates in substrate binding.

This sequence belongs to the cytidine and deoxycytidylate deaminase family. In terms of assembly, homohexamer. It depends on Zn(2+) as a cofactor.

The enzyme catalyses dCMP + H2O + H(+) = dUMP + NH4(+). Its activity is regulated as follows. Allosteric enzyme whose activity is greatly influenced by the end products of its metabolic pathway, dCTP and dTTP. Supplies the nucleotide substrate for thymidylate synthetase. This is Deoxycytidylate deaminase (CD) from Escherichia coli (Bacteriophage T4).